A 261-amino-acid chain; its full sequence is Small ribosomal subunit protein uS2 (261 aa).

Position 2 is an N-acetylserine (S2). The interval E211–W261 is disordered. Over residues D222 to W244 the composition is skewed to acidic residues. Residues A245–W261 are compositionally biased toward low complexity.

It belongs to the universal ribosomal protein uS2 family. Component of the small ribosomal subunit. Mature ribosomes consist of a small (40S) and a large (60S) subunit. The 40S subunit contains about 33 different proteins and 1 molecule of RNA (18S). The 60S subunit contains about 49 different proteins and 3 molecules of RNA (25S, 5.8S and 5S). Interacts with RPS21.

Its subcellular location is the cytoplasm. Its function is as follows. Required for the assembly and/or stability of the 40S ribosomal subunit. Required for the processing of the 20S rRNA-precursor to mature 18S rRNA in a late step of the maturation of 40S ribosomal subunits. This Meyerozyma guilliermondii (strain ATCC 6260 / CBS 566 / DSM 6381 / JCM 1539 / NBRC 10279 / NRRL Y-324) (Yeast) protein is Small ribosomal subunit protein uS2.